The sequence spans 484 residues: Sodium/pantothenate symporter (484 aa).

13 helical membrane passes run 3-23, 45-65, 74-94, 124-144, 162-182, 190-210, 238-258, 273-293, 307-327, 366-386, 397-417, 424-444, and 446-466; these read LGII…AIFA, GFVL…FVGG, LGWV…LGAL, VWLS…VQFI, LLLF…RAVV, TVMI…LGGV, FMAS…HTAV, MLIG…AGAL, VIPT…FLAA, VSYF…FAAL, LFAF…GIYW, GALS…QLGI, and LFNF…FLVG.

It belongs to the sodium:solute symporter (SSF) (TC 2.A.21) family.

Its subcellular location is the cell inner membrane. The enzyme catalyses (R)-pantothenate(in) + Na(+)(in) = (R)-pantothenate(out) + Na(+)(out). Catalyzes the sodium-dependent uptake of extracellular pantothenate. This chain is Sodium/pantothenate symporter (panF), found in Haemophilus influenzae (strain ATCC 51907 / DSM 11121 / KW20 / Rd).